A 1263-amino-acid chain; its full sequence is Histone-lysine N-methyltransferase EHMT2 (1263 aa).

2 disordered regions span residues 1–314 (MRGL…LEEW) and 332–439 (DERV…EYME). Residues 26–39 (GRGRGGAHRGRGRP) are compositionally biased toward basic residues. Asymmetric dimethylarginine is present on Arg40. Residues 83 to 95 (LEKEPRGAAERVH) show a composition bias toward basic and acidic residues. The residue at position 97 (Ser97) is a Phosphoserine. The residue at position 101 (Thr101) is a Phosphothreonine. Ser104 and Ser193 each carry phosphoserine. Lys239 is subject to N6,N6,N6-trimethyllysine; by EHMT2; alternate. Lys239 is modified (N6,N6-dimethyllysine; by EHMT2; alternate). Over residues 252–270 (PEKRPPEVQHFRMSDDMHL) the composition is skewed to basic and acidic residues. Residues Lys272 and Lys282 each participate in a glycyl lysine isopeptide (Lys-Gly) (interchain with G-Cter in SUMO2) cross-link. Phosphoserine occurs at positions 285, 294, and 298. Basic and acidic residues-rich tracts occupy residues 302–312 (ILEKGEPRPLE) and 332–343 (DERVDSDSKSEV). A compositionally biased stretch (acidic residues) spans 350–380 (LSEEEEEEEEEEEEEEEEEEEEEEEEEDEES). Residues 391 to 400 (GRRKAKKKWR) are compositionally biased toward basic residues. Residues Ser403, Ser465, and Ser466 each carry the phosphoserine modification. Thr608 carries the post-translational modification Phosphothreonine. A disordered region spans residues 621–647 (LAHDAPGRADTSQPSARMRGHGEPRRP). Lys687 is covalently cross-linked (Glycyl lysine isopeptide (Lys-Gly) (interchain with G-Cter in SUMO2)). ANK repeat units lie at residues 702 to 731 (FHPR…DPNF), 737 to 766 (SKRT…NINA), 770 to 799 (QQRT…CVYS), 803 to 833 (DGST…DVNA), 837 to 866 (GGWT…DVTL), 870 to 899 (EENI…DLHA), and 903 to 932 (HGDT…NPEL). A histone H3K9me binding region spans residues 870–872 (EEN). Residues 1025 to 1088 (QHCTCVDDCS…SCKNRVVQSG (64 aa)) enclose the Pre-SET domain. Residues Cys1027, Cys1029, Cys1033, Cys1038, Cys1040, Cys1070, Cys1074, Cys1076, and Cys1080 each coordinate Zn(2+). In terms of domain architecture, SET spans 1091-1208 (VRLQLYRTAK…TGEELGFDYG (118 aa)). Residues 1101–1103 (MGW), Tyr1138, and 1165–1166 (NH) each bind S-adenosyl-L-methionine. Residues 1127–1146 (DAEADVREDDSYLFDLDNKD) are interaction with histone H3. Residue Cys1168 coordinates Zn(2+). The interval 1207 to 1210 (YGDR) is interaction with histone H3. The region spanning 1217 to 1233 (KYFTCQCGSEKCKHSAE) is the Post-SET domain. The Zn(2+) site is built by Cys1221, Cys1223, and Cys1228. A Phosphoserine modification is found at Ser1257. Position 1263 is a phosphothreonine (Thr1263).

Belongs to the class V-like SAM-binding methyltransferase superfamily. Histone-lysine methyltransferase family. Suvar3-9 subfamily. As to quaternary structure, heterodimer; heterodimerizes with EHMT1/GLP. Interacts with GFI1B and WIZ. Part of the E2F6.com-1 complex in G0 phase composed of E2F6, MGA, MAX, TFDP1, CBX3, BAT8, EHMT1, RING1, RNF2, MBLR, L3MBTL2 and YAF2. Part of a complex composed of TRIM28, HDAC1, HDAC2 and EHMT2. Interacts with UHRF1. Interacts with CDYL. Interacts with REST only in the presence of CDYL. Part of a complex containing at least CDYL, REST, WIZ, SETB1, EHMT1 and EHMT2. Interacts with PRDM9 and CDYL; interaction only takes place when PRDM9 is bound to hotspot DNA. Interacts with SMYD5. In terms of processing, methylated at Lys-239; automethylated. As to expression, ubiquitous.

The protein localises to the nucleus. It localises to the chromosome. The enzyme catalyses N(6)-methyl-L-lysyl(9)-[histone H3] + S-adenosyl-L-methionine = N(6),N(6)-dimethyl-L-lysyl(9)-[histone H3] + S-adenosyl-L-homocysteine + H(+). It catalyses the reaction L-lysyl(9)-[histone H3] + S-adenosyl-L-methionine = N(6)-methyl-L-lysyl(9)-[histone H3] + S-adenosyl-L-homocysteine + H(+). Functionally, histone methyltransferase that specifically mono- and dimethylates 'Lys-9' of histone H3 (H3K9me1 and H3K9me2, respectively) in euchromatin. H3K9me represents a specific tag for epigenetic transcriptional repression by recruiting HP1 proteins to methylated histones. Also mediates monomethylation of 'Lys-56' of histone H3 (H3K56me1) in G1 phase, leading to promote interaction between histone H3 and PCNA and regulating DNA replication. Also weakly methylates 'Lys-27' of histone H3 (H3K27me). Also required for DNA methylation, the histone methyltransferase activity is not required for DNA methylation, suggesting that these 2 activities function independently. Probably targeted to histone H3 by different DNA-binding proteins like E2F6, MGA, MAX and/or DP1. May also methylate histone H1. In addition to the histone methyltransferase activity, also methylates non-histone proteins: mediates dimethylation of 'Lys-373' of p53/TP53. Also methylates CDYL, WIZ, ACIN1, DNMT1, HDAC1, ERCC6, KLF12 and itself. The chain is Histone-lysine N-methyltransferase EHMT2 (Ehmt2) from Mus musculus (Mouse).